The chain runs to 718 residues: Polyribonucleotide nucleotidyltransferase (718 aa).

Mg(2+)-binding residues include Asp487 and Asp493. Residues Pro554–Ile613 form the KH domain. An S1 motif domain is found at Gly623 to Arg691. Positions Asp694–Glu718 are disordered.

It belongs to the polyribonucleotide nucleotidyltransferase family. Mg(2+) serves as cofactor.

It localises to the cytoplasm. The enzyme catalyses RNA(n+1) + phosphate = RNA(n) + a ribonucleoside 5'-diphosphate. Involved in mRNA degradation. Catalyzes the phosphorolysis of single-stranded polyribonucleotides processively in the 3'- to 5'-direction. The polypeptide is Polyribonucleotide nucleotidyltransferase (Rhodopseudomonas palustris (strain HaA2)).